The sequence spans 211 residues: Probable nicotinate-nucleotide adenylyltransferase (211 aa).

The protein belongs to the NadD family.

The enzyme catalyses nicotinate beta-D-ribonucleotide + ATP + H(+) = deamido-NAD(+) + diphosphate. It functions in the pathway cofactor biosynthesis; NAD(+) biosynthesis; deamido-NAD(+) from nicotinate D-ribonucleotide: step 1/1. Functionally, catalyzes the reversible adenylation of nicotinate mononucleotide (NaMN) to nicotinic acid adenine dinucleotide (NaAD). This Shewanella frigidimarina (strain NCIMB 400) protein is Probable nicotinate-nucleotide adenylyltransferase.